Reading from the N-terminus, the 95-residue chain is IgNAR transmembrane form NE (95 aa).

One can recognise an Ig-like domain in the interval 1-36; sequence LTFSTRSLLNLPAVEWKSGAKYTCTASHSPSQSTVK. Over residues 24-35 the composition is skewed to polar residues; the sequence is CTASHSPSQSTV. The tract at residues 24 to 79 is disordered; the sequence is CTASHSPSQSTVKRVIRNPKESPKGSSETRKSPLEIMESPEDYGTEEDQLENVNED. Basic and acidic residues predominate over residues 41–56; sequence NPKESPKGSSETRKSP. Over residues 61 to 77 the composition is skewed to acidic residues; the sequence is ESPEDYGTEEDQLENVN. The N-linked (GlcNAc...) asparagine glycan is linked to asparagine 81.

In terms of tissue distribution, expressed mainly in lymphoid tissues including spleen, epigonal organ and circulating lymphocytes. Also expressed at low levels in the pancreas.

This Ginglymostoma cirratum (Nurse shark) protein is IgNAR transmembrane form NE.